We begin with the raw amino-acid sequence, 144 residues long: 3-hydroxyacyl-[acyl-carrier-protein] dehydratase FabZ (144 aa).

His47 is an active-site residue.

This sequence belongs to the thioester dehydratase family. FabZ subfamily.

It is found in the cytoplasm. It catalyses the reaction a (3R)-hydroxyacyl-[ACP] = a (2E)-enoyl-[ACP] + H2O. Functionally, involved in unsaturated fatty acids biosynthesis. Catalyzes the dehydration of short chain beta-hydroxyacyl-ACPs and long chain saturated and unsaturated beta-hydroxyacyl-ACPs. The polypeptide is 3-hydroxyacyl-[acyl-carrier-protein] dehydratase FabZ (Alcanivorax borkumensis (strain ATCC 700651 / DSM 11573 / NCIMB 13689 / SK2)).